Consider the following 421-residue polypeptide: Acetate kinase (421 aa).

Mg(2+) is bound at residue asparagine 7. Position 14 (lysine 14) interacts with ATP. Residue arginine 91 coordinates substrate. Residue aspartate 148 is the Proton donor/acceptor of the active site. Residues 208-212 (HIGNG) and 283-285 (DRR) each bind ATP. Residue glutamate 387 coordinates Mg(2+).

Belongs to the acetokinase family. As to quaternary structure, homodimer. Mg(2+) serves as cofactor. The cofactor is Mn(2+).

The protein resides in the cytoplasm. The catalysed reaction is acetate + ATP = acetyl phosphate + ADP. The protein operates within metabolic intermediate biosynthesis; acetyl-CoA biosynthesis; acetyl-CoA from acetate: step 1/2. In terms of biological role, catalyzes the formation of acetyl phosphate from acetate and ATP. Can also catalyze the reverse reaction. This Geobacter sulfurreducens (strain ATCC 51573 / DSM 12127 / PCA) protein is Acetate kinase.